Consider the following 419-residue polypeptide: MTTQFSVAGIELELARYPKDQESNLQAWDAADEHLIKHLIETEQTPVVTAIINDNFGALTACLRSIAPTWPLMVETDAKTSLLGNLQNLATNNLSSEGIEWLNSREALPEQIELVLMKLPKNLTYFAHQLNRLSQVLPKGTQVLISAKAKSINKSVLELIGKNLGSASASLTWKKTRVITCISDGEIRSLPKEMQWSVPRLNLEIRNLSNVFAANKLDIGAEIMLENMPKGDFKSIIDLGCGNGILGLHAKQLFPQAYIHFVDDSEMAIESAKQNWALNKLDTQGLVGEQATFGWDDCLTHMSEGVRPDLVLCNPPFHQGEAITDHIAWQMFLQSWRALKNGGILHVVGNRHLAYHIKLQRIFKNCTTVASNGKFVILQAQKISKKAEPFETHPTEAEAKVEVTESKPHPQSSLYGTKK.

Residues 386–408 (KAEPFETHPTEAEAKVEVTESKP) are compositionally biased toward basic and acidic residues. The tract at residues 386–419 (KAEPFETHPTEAEAKVEVTESKPHPQSSLYGTKK) is disordered. Residues 409–419 (HPQSSLYGTKK) are compositionally biased toward polar residues.

Belongs to the methyltransferase superfamily. RlmG family.

Its subcellular location is the cytoplasm. The catalysed reaction is guanosine(1835) in 23S rRNA + S-adenosyl-L-methionine = N(2)-methylguanosine(1835) in 23S rRNA + S-adenosyl-L-homocysteine + H(+). Functionally, specifically methylates the guanine in position 1835 (m2G1835) of 23S rRNA. The sequence is that of Ribosomal RNA large subunit methyltransferase G from Shewanella woodyi (strain ATCC 51908 / MS32).